Consider the following 296-residue polypeptide: Maltose/maltodextrin transport system permease protein MalG (296 aa).

At methionine 1–arginine 12 the chain is on the cytoplasmic side. Residues valine 13–isoleucine 35 form a helical membrane-spanning segment. Over alanine 36–serine 88 the chain is Periplasmic. The 197-residue stretch at leucine 85 to alanine 281 folds into the ABC transmembrane type-1 domain. The helical transmembrane segment at valine 89–alanine 111 threads the bilayer. The Cytoplasmic portion of the chain corresponds to arginine 112–lysine 123. The chain crosses the membrane as a helical span at residues alanine 124 to leucine 143. At phenylalanine 144–proline 152 the chain is on the periplasmic side. A helical transmembrane segment spans residues phenylalanine 153–tryptophan 175. Over threonine 176 to arginine 204 the chain is Cytoplasmic. A helical transmembrane segment spans residues leucine 205 to isoleucine 227. The Periplasmic segment spans residues glycine 228 to asparagine 257. Residues tyrosine 258–leucine 280 traverse the membrane as a helical segment. The Cytoplasmic portion of the chain corresponds to alanine 281–glycine 296.

It belongs to the binding-protein-dependent transport system permease family. MalFG subfamily. As to quaternary structure, the complex is composed of two ATP-binding proteins (MalK), two transmembrane proteins (MalG and MalF) and a solute-binding protein (MalE).

The protein localises to the cell inner membrane. In terms of biological role, part of the ABC transporter complex MalEFGK involved in maltose/maltodextrin import. Probably responsible for the translocation of the substrate across the membrane. This Vibrio parahaemolyticus serotype O3:K6 (strain RIMD 2210633) protein is Maltose/maltodextrin transport system permease protein MalG (malG).